We begin with the raw amino-acid sequence, 310 residues long: Translocator protein BipD (310 aa).

Coiled coils occupy residues 127–171 (DPIL…LQDY) and 250–299 (DTAR…AIST).

It belongs to the invasin protein D family.

The protein localises to the secreted. In terms of biological role, required for invasion of epithelial cells, as well as for survival within host cells, escape from endocytic vesicles and subsequent actin-tail formation. Probably regulates the secretion of effectors BipB and BipC and their final integration into the target cell membrane. The sequence is that of Translocator protein BipD (bipD) from Burkholderia thailandensis (strain ATCC 700388 / DSM 13276 / CCUG 48851 / CIP 106301 / E264).